A 468-amino-acid polypeptide reads, in one-letter code: 6-phosphogluconate dehydrogenase, decarboxylating (468 aa).

NADP(+)-binding positions include 9–14 (GLAVMG), 32–34 (NRS), 73–75 (VQA), and Asn-101. Substrate contacts are provided by residues Asn-101 and 127–129 (SGG). The active-site Proton acceptor is the Lys-182. Residue 185-186 (HN) participates in substrate binding. Glu-189 functions as the Proton donor in the catalytic mechanism. Residues Tyr-190, Lys-259, Arg-286, Arg-444, and His-450 each coordinate substrate.

It belongs to the 6-phosphogluconate dehydrogenase family. As to quaternary structure, homodimer.

It carries out the reaction 6-phospho-D-gluconate + NADP(+) = D-ribulose 5-phosphate + CO2 + NADPH. It participates in carbohydrate degradation; pentose phosphate pathway; D-ribulose 5-phosphate from D-glucose 6-phosphate (oxidative stage): step 3/3. Its function is as follows. Catalyzes the oxidative decarboxylation of 6-phosphogluconate to ribulose 5-phosphate and CO(2), with concomitant reduction of NADP to NADPH. The polypeptide is 6-phosphogluconate dehydrogenase, decarboxylating (gnd) (Staphylococcus aureus (strain COL)).